We begin with the raw amino-acid sequence, 275 residues long: Large ribosomal subunit protein uL2c (275 aa).

Positions 225–275 are disordered; that stretch reads MNPCDHPHGGGEGRSPIGRPRPVSPWGKPALGQRTRKGHKYSDQMILRRRK.

Belongs to the universal ribosomal protein uL2 family. As to quaternary structure, part of the 50S ribosomal subunit.

Its subcellular location is the plastid. It is found in the chloroplast. The sequence is that of Large ribosomal subunit protein uL2c (rpl2) from Oltmannsiellopsis viridis (Marine flagellate).